The chain runs to 1132 residues: APC membrane recruitment protein 1 (1132 aa).

Met-1 is modified (N-acetylmethionine). Polar residues predominate over residues 1 to 21 (MESQQDEAVQTKGASTSSDAQ). Disordered stretches follow at residues 1–256 (MESQ…ACKN), 268–301 (FMQP…NPPN), 338–423 (SMTD…GEEN), 469–505 (GLGE…DSGE), 674–699 (TSGG…EPDW), 736–770 (MQEA…GNAT), 924–949 (ELQA…DSPL), and 1038–1132 (SQAS…NLAK). Residues 24–35 (GAEKGAKNKTTE) are compositionally biased toward basic and acidic residues. The span at 121–133 (SKSSAQFPSSQSA) shows a compositional bias: low complexity. Basic and acidic residues-rich tracts occupy residues 195–208 (KELE…HEHV), 218–229 (EIFRDTRKENAK), and 281–290 (EEPHTSETEG). Residues 372–423 (ALPDDDDNDDEEEEEEEEEEEEEEEEEEEEEEEEEEEELLEDEEEVKDGEEN) are compositionally biased toward acidic residues. Composition is skewed to polar residues over residues 475-486 (TPQSDQQESAPN) and 677-696 (GSQT…SSSE). Composition is skewed to acidic residues over residues 756–765 (EEPEEEEEEK) and 931–941 (DSDEEGEEEEG). Polar residues-rich tracts occupy residues 1059–1072 (SCSS…QSQA) and 1115–1132 (ASLS…NLAK).

The protein belongs to the Amer family. As to quaternary structure, interacts with CTNNB1, AXIN1, LRP6, KEAP1, APC and BTRC. Interacts with SCF (SKP1-CUL1-F-box protein) E3 ubiquitin-protein ligase complexes containing BTRC and/or FBXW11. Identified in the beta-catenin destruction complex containing CTNNB1, APC, AXIN1 and AXIN2. Interacts with WT1. As to expression, expressed in kidney.

It localises to the cytoplasm. The protein localises to the cell membrane. It is found in the nucleus. Regulator of the canonical Wnt signaling pathway. Acts by specifically binding phosphatidylinositol 4,5-bisphosphate (PtdIns(4,5)P2), translocating to the cell membrane and interacting with key regulators of the canonical Wnt signaling pathway, such as components of the beta-catenin destruction complex. Acts both as a positive and negative regulator of the Wnt signaling pathway, depending on the context: acts as a positive regulator by promoting LRP6 phosphorylation. Also acts as a negative regulator by acting as a scaffold protein for the beta-catenin destruction complex and promoting stabilization of Axin at the cell membrane. Promotes CTNNB1 ubiquitination and degradation. Involved in kidney development. The polypeptide is APC membrane recruitment protein 1 (Amer1) (Mus musculus (Mouse)).